A 240-amino-acid chain; its full sequence is Dihydromonapterin reductase (240 aa).

Tyr152 acts as the Proton acceptor in catalysis.

The protein belongs to the short-chain dehydrogenases/reductases (SDR) family. FolM subfamily.

It catalyses the reaction (6S)-5,6,7,8-tetrahydrofolate + NADP(+) = 7,8-dihydrofolate + NADPH + H(+). The enzyme catalyses 7,8-dihydromonapterin + NADPH + H(+) = 5,6,7,8-tetrahydromonapterin + NADP(+). Catalyzes the reduction of dihydromonapterin to tetrahydromonapterin. Also has lower activity with dihydrofolate. The chain is Dihydromonapterin reductase (folM) from Escherichia coli (strain SMS-3-5 / SECEC).